The primary structure comprises 212 residues: Small ribosomal subunit protein uS5 (212 aa).

Residues 1–42 are disordered; that stretch reads MPGRERRDGGRSADKNDNNKGRNDRGRNDRNNRRGRGRDDDR. Positions 45–108 constitute an S5 DRBM domain; that stretch reads YIERVVTINR…EEARKNFFRV (64 aa).

It belongs to the universal ribosomal protein uS5 family. In terms of assembly, part of the 30S ribosomal subunit. Contacts proteins S4 and S8.

Functionally, with S4 and S12 plays an important role in translational accuracy. Its function is as follows. Located at the back of the 30S subunit body where it stabilizes the conformation of the head with respect to the body. The chain is Small ribosomal subunit protein uS5 from Corynebacterium kroppenstedtii (strain DSM 44385 / JCM 11950 / CIP 105744 / CCUG 35717).